A 176-amino-acid chain; its full sequence is Translation initiation factor IF-3 (176 aa).

It belongs to the IF-3 family. Monomer.

Its subcellular location is the cytoplasm. Its function is as follows. IF-3 binds to the 30S ribosomal subunit and shifts the equilibrium between 70S ribosomes and their 50S and 30S subunits in favor of the free subunits, thus enhancing the availability of 30S subunits on which protein synthesis initiation begins. The polypeptide is Translation initiation factor IF-3 (Wolinella succinogenes (strain ATCC 29543 / DSM 1740 / CCUG 13145 / JCM 31913 / LMG 7466 / NCTC 11488 / FDC 602W) (Vibrio succinogenes)).